The sequence spans 152 residues: tRNA-specific adenosine deaminase (152 aa).

Residues 2-111 (AERTHFMELA…AQDPKGGAVE (110 aa)) enclose the CMP/dCMP-type deaminase domain. A Zn(2+)-binding site is contributed by His53. The active-site Proton donor is the Glu55. Zn(2+)-binding residues include Cys83 and Cys86.

This sequence belongs to the cytidine and deoxycytidylate deaminase family. Homodimer. Requires Zn(2+) as cofactor.

It carries out the reaction adenosine(34) in tRNA + H2O + H(+) = inosine(34) in tRNA + NH4(+). Its function is as follows. Catalyzes the deamination of adenosine to inosine at the wobble position 34 of tRNA(Arg2). The sequence is that of tRNA-specific adenosine deaminase from Agrobacterium fabrum (strain C58 / ATCC 33970) (Agrobacterium tumefaciens (strain C58)).